Here is a 194-residue protein sequence, read N- to C-terminus: dCTP deaminase (194 aa).

DCTP contacts are provided by residues 110-115 (RSSLAR), aspartate 128, 136-138 (VLE), tyrosine 171, lysine 178, and glutamine 182. The active-site Proton donor/acceptor is glutamate 138. Positions 169-194 (RPYNKRDNAKYKDQTSAVGSRISGEN) are disordered. Positions 170-181 (PYNKRDNAKYKD) are enriched in basic and acidic residues. Residues 182–194 (QTSAVGSRISGEN) show a composition bias toward polar residues.

This sequence belongs to the dCTP deaminase family. As to quaternary structure, homotrimer.

The enzyme catalyses dCTP + H2O + H(+) = dUTP + NH4(+). The protein operates within pyrimidine metabolism; dUMP biosynthesis; dUMP from dCTP (dUTP route): step 1/2. Functionally, catalyzes the deamination of dCTP to dUTP. This is dCTP deaminase from Marinomonas sp. (strain MWYL1).